The primary structure comprises 4646 residues: Cytoplasmic dynein 1 heavy chain 1 (4646 aa).

S2 is subject to N-acetylserine. The interval 53-1867 is stem; the sequence is EAALEEKSAL…SIQMANAKFN (1815 aa). At S70 the chain carries Phosphoserine. Coiled coils occupy residues 181-202, 455-478, and 543-566; these read SVEK…NIEI, AHRK…QLRA, and TEAW…RITA. The interval 448–703 is interaction with DYNC1I2; it reads MVWRINPAHR…NTQEIFDDWA (256 aa). Residues 651–802 form an interaction with DYNC1LI2 region; that stretch reads AKQIDRQLTA…EKVEERNTIS (152 aa). K1125 carries the N6-acetyllysine modification. 2 coiled-coil regions span residues 1171–1252 and 1357–1373; these read TYVQ…AVES and RKLR…LKSF. Residue S1230 is modified to Phosphoserine. AAA regions lie at residues 1868 to 2099, 2180 to 2452, 2556 to 2805, and 2899 to 3168; these read YGFE…VLVS, EELK…LTRL, EVET…WVRG, and VFYE…GGRT. Residues 1906–1913 and 2224–2231 contribute to the ATP site; these read GPAGTGKT and GPSGSGKS. The tract at residues 2390–2411 is disordered; the sequence is GEDEAQRRRKGKEDEGEEAASP. ATP-binding positions include 2595-2602 and 2937-2944; these read GPPGSGKT and GVSGAGKT. 3 coiled-coil regions span residues 3189–3275, 3396–3500, and 3737–3800; these read EKRS…ADKQ, AIAQ…KNQM, and EFQL…VSQQ. The tract at residues 3189 to 3500 is stalk; that stretch reads EKRSELEEQQ…KTSETFKNQM (312 aa). Position 3480 is an N6-acetyllysine (K3480). AAA stretches follow at residues 3553–3782 and 4005–4221; these read LSNA…EVTR and AHMF…TVDT. S4162 bears the Phosphoserine mark. Position 4283 is an N6-acetyllysine (K4283). T4366 is modified (phosphothreonine). S4368 is subject to Phosphoserine.

This sequence belongs to the dynein heavy chain family. As to quaternary structure, homodimer. The cytoplasmic dynein 1 complex consists of two catalytic heavy chains (HCs) and a number of non-catalytic subunits presented by intermediate chains (ICs), light intermediate chains (LICs) and light chains (LCs); the composition seems to vary in respect to the IC, LIC and LC composition. The heavy chain homodimer serves as a scaffold for the probable homodimeric assembly of the respective non-catalytic subunits. The ICs and LICs bind directly to the HC dimer and dynein LCs assemble on the IC dimer. Interacts with DYNC1LI1; DYNC1LI1 and DYNC1LI2 bind mutually exclusive to DYNC1H1. Interacts with DYNC1LI2; DYNC1LI1 and DYNC1LI2 bind mutually exclusive to DYNC1H1. Interacts with DYNC1I2. Interacts with BICD2. Interacts with isoform 2 of CRACR2A. Interacts with DNALI1.

It is found in the cytoplasm. The protein localises to the cytoskeleton. Cytoplasmic dynein 1 acts as a motor for the intracellular retrograde motility of vesicles and organelles along microtubules. Dynein has ATPase activity; the force-producing power stroke is thought to occur on release of ADP. Plays a role in mitotic spindle assembly and metaphase plate congression. The protein is Cytoplasmic dynein 1 heavy chain 1 of Homo sapiens (Human).